The chain runs to 356 residues: Chorismate synthase (356 aa).

Arginine 44 and arginine 49 together coordinate NADP(+). Residues 121 to 123 (HFS), glycine 278, 293 to 297 (KPTPS), and arginine 320 each bind FMN.

The protein belongs to the chorismate synthase family. FMNH2 serves as cofactor.

It catalyses the reaction 5-O-(1-carboxyvinyl)-3-phosphoshikimate = chorismate + phosphate. Its pathway is metabolic intermediate biosynthesis; chorismate biosynthesis; chorismate from D-erythrose 4-phosphate and phosphoenolpyruvate: step 7/7. Catalyzes the anti-1,4-elimination of the C-3 phosphate and the C-6 proR hydrogen from 5-enolpyruvylshikimate-3-phosphate (EPSP) to yield chorismate, which is the branch point compound that serves as the starting substrate for the three terminal pathways of aromatic amino acid biosynthesis. This reaction introduces a second double bond into the aromatic ring system. This chain is Chorismate synthase, found in Thermococcus gammatolerans (strain DSM 15229 / JCM 11827 / EJ3).